The sequence spans 288 residues: 4-hydroxybenzoate octaprenyltransferase (288 aa).

A run of 6 helical transmembrane segments spans residues 33–53, 99–119, 163–183, 213–233, 234–254, and 268–288; these read LWAL…AVFV, LFIV…TMTI, ESLP…AVAY, LIIG…GWLN, GLGW…GWQQ, and AFMN…MSYL.

It belongs to the UbiA prenyltransferase family. The cofactor is Mg(2+).

It is found in the cell inner membrane. It catalyses the reaction all-trans-octaprenyl diphosphate + 4-hydroxybenzoate = 4-hydroxy-3-(all-trans-octaprenyl)benzoate + diphosphate. Its pathway is cofactor biosynthesis; ubiquinone biosynthesis. In terms of biological role, catalyzes the prenylation of para-hydroxybenzoate (PHB) with an all-trans polyprenyl group. Mediates the second step in the final reaction sequence of ubiquinone-8 (UQ-8) biosynthesis, which is the condensation of the polyisoprenoid side chain with PHB, generating the first membrane-bound Q intermediate 3-octaprenyl-4-hydroxybenzoate. The protein is 4-hydroxybenzoate octaprenyltransferase of Klebsiella pneumoniae subsp. pneumoniae (strain ATCC 700721 / MGH 78578).